We begin with the raw amino-acid sequence, 247 residues long: Phosphoribosylaminoimidazole-succinocarboxamide synthase (247 aa).

This sequence belongs to the SAICAR synthetase family.

The enzyme catalyses 5-amino-1-(5-phospho-D-ribosyl)imidazole-4-carboxylate + L-aspartate + ATP = (2S)-2-[5-amino-1-(5-phospho-beta-D-ribosyl)imidazole-4-carboxamido]succinate + ADP + phosphate + 2 H(+). The protein operates within purine metabolism; IMP biosynthesis via de novo pathway; 5-amino-1-(5-phospho-D-ribosyl)imidazole-4-carboxamide from 5-amino-1-(5-phospho-D-ribosyl)imidazole-4-carboxylate: step 1/2. This chain is Phosphoribosylaminoimidazole-succinocarboxamide synthase, found in Prochlorococcus marinus (strain NATL1A).